Reading from the N-terminus, the 89-residue chain is Small ribosomal subunit protein uS15 (89 aa).

The protein belongs to the universal ribosomal protein uS15 family. In terms of assembly, part of the 30S ribosomal subunit. Forms a bridge to the 50S subunit in the 70S ribosome, contacting the 23S rRNA.

In terms of biological role, one of the primary rRNA binding proteins, it binds directly to 16S rRNA where it helps nucleate assembly of the platform of the 30S subunit by binding and bridging several RNA helices of the 16S rRNA. Forms an intersubunit bridge (bridge B4) with the 23S rRNA of the 50S subunit in the ribosome. This is Small ribosomal subunit protein uS15 from Acidothermus cellulolyticus (strain ATCC 43068 / DSM 8971 / 11B).